The chain runs to 547 residues: Chaperonin GroEL (547 aa).

Residues 30–33 (TLGP), Lys51, 87–91 (DGTTT), Gly415, and Asp496 contribute to the ATP site. The disordered stretch occupies residues 528 to 547 (KEGAGAGGGMPDMGGMGGMM). Residues 531 to 547 (AGAGGGMPDMGGMGGMM) show a composition bias toward gly residues.

The protein belongs to the chaperonin (HSP60) family. In terms of assembly, forms a cylinder of 14 subunits composed of two heptameric rings stacked back-to-back. Interacts with the co-chaperonin GroES.

It is found in the cytoplasm. It catalyses the reaction ATP + H2O + a folded polypeptide = ADP + phosphate + an unfolded polypeptide.. Functionally, together with its co-chaperonin GroES, plays an essential role in assisting protein folding. The GroEL-GroES system forms a nano-cage that allows encapsulation of the non-native substrate proteins and provides a physical environment optimized to promote and accelerate protein folding. The protein is Chaperonin GroEL of Dinoroseobacter shibae (strain DSM 16493 / NCIMB 14021 / DFL 12).